We begin with the raw amino-acid sequence, 510 residues long: Guanosine import ATP-binding protein NupO (510 aa).

ABC transporter domains are found at residues Ile5 to Glu240 and Leu257 to Thr501. Gly37–Ser44 provides a ligand contact to ATP.

Belongs to the ABC transporter superfamily. In terms of assembly, the complex is composed of two ATP-binding proteins (NupO), two transmembrane proteins (NupP and NupQ) and a solute-binding protein (NupN).

It localises to the cell membrane. Part of an ABC transporter complex involved in the uptake of guanosine. Responsible for energy coupling to the transport system. May be a nucleoside transporter of broad specificity but with various affinities for different substrates. The sequence is that of Guanosine import ATP-binding protein NupO from Bacillus subtilis (strain 168).